The primary structure comprises 377 residues: MEKLKSFRHLNNNIDLILNEENSTEILGAQAHIWNQIFNFINSMSLKCAIQLGIPDIINNHGKPMTISQLTLALPINRKKSPCVYRLMRILIHSGFFALQKAEVGEEGGGEEEGYVITDASKLLLKDNPMSVTPFLLAMLDPVMTKPWDFLSNWFQNGDPTPFDTANGMAFWDYGSHEPKLARFFNDAMASDARLVTSVVIEKCKGVFEGVESLVDVGGGTGTVASSIAAAFPHIQCTVFDLPHVVADLQGGNNLNFVGGDMFVDVPATEVVLLKWILHDWNDEESVKILKKCKEAISKSNKKGGKVIIIDMKVENEKDEDDESYETQLFFDMLMMALVTGRERNEKEWAKLFKDAGFSNYKITPILGLRSLIEVYP.

Asp241 is a binding site for S-adenosyl-L-methionine. His279 (proton acceptor) is an active-site residue.

It belongs to the class I-like SAM-binding methyltransferase superfamily. Cation-independent O-methyltransferase family. Highly expressed in lupulin glands. Detected in early-, mid- and late-stage cones.

This is Probable O-methyltransferase 3 from Humulus lupulus (European hop).